We begin with the raw amino-acid sequence, 421 residues long: MFSFFRRKKKQETPALEEAQIQETAAKAESETAQVIENIKEDAESLAESVKGQVESAVETVSGAVEQVKEAVAEMLSEAEEAAEKAAEQVEAAKEAIAETVGEAVGQVQEAVATTEEHKLGWAARLKQGLTKSRDKMAKSLAGVFGGGQIDEDLYEELETVLITSDMGMEATEYLMKDVRDRVSLKGLKDGNELRGALKEALYDLIKPLEKPLVLPETKEPFVIMLAGINGAGKTTSIGKLAKYFQAQGKSVLLAAGDTFRAAAREQLQAWGERNNVTVISQTTGDSAAVCFDAVQAAKARGIDIVLADTAGRLPTQLHLMEEIKKVKRVLQKAMPDAPHEIIVVLDANIGQNAVNQVKAFDDALGLTGLIVTKLDGTAKGGILAALASDRPVPVRYIGVGEGIDDLRPFDARAFVDALLD.

Basic residues predominate over residues 1-10 (MFSFFRRKKK). The segment at 1–31 (MFSFFRRKKKQETPALEEAQIQETAAKAESE) is disordered. GTP contacts are provided by residues 228-235 (GINGAGKT), 309-313 (DTAGR), and 373-376 (TKLD).

This sequence belongs to the GTP-binding SRP family. FtsY subfamily. As to quaternary structure, part of the signal recognition particle protein translocation system, which is composed of SRP and FtsY. SRP is a ribonucleoprotein composed of Ffh and a 4.5S RNA molecule.

The protein localises to the cell inner membrane. It localises to the cytoplasm. It catalyses the reaction GTP + H2O = GDP + phosphate + H(+). Involved in targeting and insertion of nascent membrane proteins into the cytoplasmic membrane. Acts as a receptor for the complex formed by the signal recognition particle (SRP) and the ribosome-nascent chain (RNC). Interaction with SRP-RNC leads to the transfer of the RNC complex to the Sec translocase for insertion into the membrane, the hydrolysis of GTP by both Ffh and FtsY, and the dissociation of the SRP-FtsY complex into the individual components. This Neisseria meningitidis serogroup A / serotype 4A (strain DSM 15465 / Z2491) protein is Signal recognition particle receptor FtsY.